The sequence spans 120 residues: Ribonuclease P protein component (120 aa).

This sequence belongs to the RnpA family. Consists of a catalytic RNA component (M1 or rnpB) and a protein subunit.

The catalysed reaction is Endonucleolytic cleavage of RNA, removing 5'-extranucleotides from tRNA precursor.. Functionally, RNaseP catalyzes the removal of the 5'-leader sequence from pre-tRNA to produce the mature 5'-terminus. It can also cleave other RNA substrates such as 4.5S RNA. The protein component plays an auxiliary but essential role in vivo by binding to the 5'-leader sequence and broadening the substrate specificity of the ribozyme. The chain is Ribonuclease P protein component from Bordetella avium (strain 197N).